The chain runs to 109 residues: Spermidine export protein MdtI (109 aa).

Transmembrane regions (helical) follow at residues 6–26, 36–56, 64–84, and 88–108; these read WIHG…NVLL, CYGI…SQAV, AYAL…WVLF, and LNPK…MIKF.

It belongs to the drug/metabolite transporter (DMT) superfamily. Small multidrug resistance (SMR) (TC 2.A.7.1) family. MdtI subfamily. In terms of assembly, forms a complex with MdtJ.

It is found in the cell inner membrane. Its function is as follows. Catalyzes the excretion of spermidine. The protein is Spermidine export protein MdtI of Salmonella choleraesuis (strain SC-B67).